The primary structure comprises 288 residues: Acetyl-coenzyme A carboxylase carboxyl transferase subunit beta (288 aa).

Residues 32 to 288 (MWAKCPSCKR…LRLHSLEGWR (257 aa)) form the CoA carboxyltransferase N-terminal domain. Positions 36, 39, 54, and 57 each coordinate Zn(2+). Residues 36 to 57 (CPSCKRTLYTKEMGAEKICPHC) form a C4-type zinc finger.

This sequence belongs to the AccD/PCCB family. In terms of assembly, acetyl-CoA carboxylase is a heterohexamer composed of biotin carboxyl carrier protein (AccB), biotin carboxylase (AccC) and two subunits each of ACCase subunit alpha (AccA) and ACCase subunit beta (AccD). It depends on Zn(2+) as a cofactor.

The protein localises to the cytoplasm. It catalyses the reaction N(6)-carboxybiotinyl-L-lysyl-[protein] + acetyl-CoA = N(6)-biotinyl-L-lysyl-[protein] + malonyl-CoA. It functions in the pathway lipid metabolism; malonyl-CoA biosynthesis; malonyl-CoA from acetyl-CoA: step 1/1. Component of the acetyl coenzyme A carboxylase (ACC) complex. Biotin carboxylase (BC) catalyzes the carboxylation of biotin on its carrier protein (BCCP) and then the CO(2) group is transferred by the transcarboxylase to acetyl-CoA to form malonyl-CoA. This Enterococcus faecalis (strain ATCC 700802 / V583) protein is Acetyl-coenzyme A carboxylase carboxyl transferase subunit beta.